The chain runs to 394 residues: Phosphopentomutase (394 aa).

The Mn(2+) site is built by aspartate 14, aspartate 287, histidine 292, aspartate 328, histidine 329, and histidine 340.

The protein belongs to the phosphopentomutase family. Mn(2+) serves as cofactor.

It is found in the cytoplasm. It carries out the reaction 2-deoxy-alpha-D-ribose 1-phosphate = 2-deoxy-D-ribose 5-phosphate. The catalysed reaction is alpha-D-ribose 1-phosphate = D-ribose 5-phosphate. Its pathway is carbohydrate degradation; 2-deoxy-D-ribose 1-phosphate degradation; D-glyceraldehyde 3-phosphate and acetaldehyde from 2-deoxy-alpha-D-ribose 1-phosphate: step 1/2. Isomerase that catalyzes the conversion of deoxy-ribose 1-phosphate (dRib-1-P) and ribose 1-phosphate (Rib-1-P) to deoxy-ribose 5-phosphate (dRib-5-P) and ribose 5-phosphate (Rib-5-P), respectively. The chain is Phosphopentomutase from Listeria monocytogenes serotype 4a (strain HCC23).